The primary structure comprises 117 residues: MAVYVKFKVPEEIQKELLDAVAKAQKIKKGANEVTKAVERGIAKLVIIAEDVKPEEVVAHLPYLCEEKGIPYAYVASKQDLGKAAGLEVAASSVAIINEGDAEELKVLIEKVNVLKQ.

It belongs to the eukaryotic ribosomal protein eL8 family. As to quaternary structure, part of the 50S ribosomal subunit. Probably part of the RNase P complex.

Its subcellular location is the cytoplasm. In terms of biological role, multifunctional RNA-binding protein that recognizes the K-turn motif in ribosomal RNA, the RNA component of RNase P, box H/ACA, box C/D and box C'/D' sRNAs. In Methanocaldococcus jannaschii (strain ATCC 43067 / DSM 2661 / JAL-1 / JCM 10045 / NBRC 100440) (Methanococcus jannaschii), this protein is Large ribosomal subunit protein eL8.